A 108-amino-acid polypeptide reads, in one-letter code: Heme oxygenase (staphylobilin-producing) 2 (108 aa).

The 92-residue stretch at 2–93 (FMAENRLQLQ…DDDGQQSPIL (92 aa)) folds into the ABM domain. Residue Asn-6 participates in Fe cation binding. Heme-binding positions include 21–28 (RFYNRQGI) and His-76.

It belongs to the antibiotic biosynthesis monooxygenase family. Heme-degrading monooxygenase IsdG subfamily. Homodimer.

Its subcellular location is the cytoplasm. It catalyses the reaction heme b + 5 AH2 + 4 O2 + 2 H(+) = delta-staphylobilin + Fe(2+) + formaldehyde + 5 A + 4 H2O. The catalysed reaction is heme b + 5 AH2 + 4 O2 + 2 H(+) = beta-staphylobilin + Fe(2+) + formaldehyde + 5 A + 4 H2O. In terms of biological role, allows bacterial pathogens to use the host heme as an iron source. Catalyzes the oxidative degradation of the heme macrocyclic porphyrin ring to the oxo-bilirubin chromophore staphylobilin (a mixture of the linear tetrapyrroles 5-oxo-delta-bilirubin and 15-oxo-beta-bilirubin) in the presence of a suitable electron donor such as ascorbate or NADPH--cytochrome P450 reductase, with subsequent release of free iron. This chain is Heme oxygenase (staphylobilin-producing) 2 (isdI), found in Staphylococcus aureus (strain MRSA252).